Here is a 1497-residue protein sequence, read N- to C-terminus: DNA-directed RNA polymerase subunit beta' (1497 aa).

Positions 67, 69, 82, and 85 each coordinate Zn(2+). Residues aspartate 499, aspartate 501, and aspartate 503 each coordinate Mg(2+). Positions 867, 943, 950, and 953 each coordinate Zn(2+). Positions 1476-1497 (ESNATERVVEEPATREGFANER) are disordered. A compositionally biased stretch (basic and acidic residues) spans 1482-1497 (RVVEEPATREGFANER).

This sequence belongs to the RNA polymerase beta' chain family. The RNAP catalytic core consists of 2 alpha, 1 beta, 1 beta' and 1 omega subunit. When a sigma factor is associated with the core the holoenzyme is formed, which can initiate transcription. It depends on Mg(2+) as a cofactor. Zn(2+) is required as a cofactor.

The catalysed reaction is RNA(n) + a ribonucleoside 5'-triphosphate = RNA(n+1) + diphosphate. Functionally, DNA-dependent RNA polymerase catalyzes the transcription of DNA into RNA using the four ribonucleoside triphosphates as substrates. The sequence is that of DNA-directed RNA polymerase subunit beta' from Pelodictyon phaeoclathratiforme (strain DSM 5477 / BU-1).